We begin with the raw amino-acid sequence, 495 residues long: UDP-N-acetylmuramate--L-alanine ligase (495 aa).

120 to 126 is a binding site for ATP; the sequence is GSHGKTT.

The protein belongs to the MurCDEF family.

It localises to the cytoplasm. The enzyme catalyses UDP-N-acetyl-alpha-D-muramate + L-alanine + ATP = UDP-N-acetyl-alpha-D-muramoyl-L-alanine + ADP + phosphate + H(+). The protein operates within cell wall biogenesis; peptidoglycan biosynthesis. Functionally, cell wall formation. The polypeptide is UDP-N-acetylmuramate--L-alanine ligase (Rickettsia prowazekii (strain Madrid E)).